The primary structure comprises 485 residues: Choline/ethanolamine transporter flvcr2b (485 aa).

The Cytoplasmic portion of the chain corresponds to 1-46 (MDTRFNDINRVKMGDESKSVDGEVNDNTYYSKTDAEVNFEHRYTTP). A helical membrane pass occupies residues 47–71 (ETRLYKKRWVIVCLFSSYSLCNSYQ). Asn68 and Trp72 together coordinate choline. At 72-89 (WIQYGIINNIFMRFYGVD) the chain is on the extracellular side. A helical transmembrane segment spans residues 90-117 (SFTIDWMSMIYMLTYIPLIFPVSWLLDK). The Cytoplasmic segment spans residues 118–119 (KG). The chain crosses the membrane as a helical span at residues 120-139 (LRVIALVAAALNCAGTWIKV). Residues 140-146 (ASARPDL) are Extracellular-facing. Residues 147-175 (FPVTFLGQFTCSVAQVFILGMPSRIASVW) form a helical membrane-spanning segment. Choline contacts are provided by Gln161 and Leu165. Topologically, residues 176–180 (FGSDE) are cytoplasmic. A helical transmembrane segment spans residues 181-206 (VSTACSIGVFGNQLGIAIGFLVPPIL). The Extracellular portion of the chain corresponds to 207–211 (VPNVD). Residues 212 to 241 (DLDELAAHIRVMFYITAGVATFLFVLVVIV) traverse the membrane as a helical segment. Over 242 to 277 (FQERPEIPPTLAQAAARRISPESYSYTASILRLLRN) the chain is Cytoplasmic. Residues 278 to 308 (KAFILLVITYGLNVGCFYAVSTLLNRMIIEH) form a helical membrane-spanning segment. Tyr295 provides a ligand contact to choline. Topologically, residues 309-312 (YPGE) are extracellular. A helical transmembrane segment spans residues 313–341 (EVNAGRIGLTIVVAGMVGSLICGIWLDRS). The Cytoplasmic portion of the chain corresponds to 342 to 343 (KT). Residues 344–366 (YKQTTLAVYLMSLMGLVIYAFTL) traverse the membrane as a helical segment. At 367-369 (DLH) the chain is on the extracellular side. A helical transmembrane segment spans residues 370–399 (HLWVVFITAGALGFFMTGYLPLGFEFAVEL). The Cytoplasmic portion of the chain corresponds to 400-407 (TYPESEGT). The helical transmembrane segment at 408-433 (SSGLLNCSAQVFGIIFTICQGKIMDS) threads the bilayer. Gln417 contributes to the choline binding site. Topologically, residues 434–435 (FG) are extracellular. A helical membrane pass occupies residues 436–458 (TLAGNLFLCAFLLIGTIITGCIK). Residues 459-485 (SDLRRQLANQQAQTADHLDTSPTQTRF) lie on the Cytoplasmic side of the membrane.

It belongs to the major facilitator superfamily. Feline leukemia virus subgroup C receptor (TC 2.A.1.28.1) family.

The protein resides in the cell membrane. It is found in the mitochondrion membrane. Its subcellular location is the endoplasmic reticulum membrane. The catalysed reaction is choline(out) = choline(in). It catalyses the reaction ethanolamine(in) = ethanolamine(out). It carries out the reaction heme b(in) = heme b(out). Functionally, choline uniporter that specifically mediates choline uptake at the blood-brain-barrier. Responsible for the majority of choline uptake across the blood-brain-barrier from the circulation into the brain. Choline, a nutrient critical for brain development, is a precursor of phosphatidylcholine, as well as betaine. Also mediates transport of ethanolamine. Choline and ethanolamine transport is not coupled with proton transport and is exclusively driven by the choline gradient across the plasma membrane. Also acts as a heme b transporter. The polypeptide is Choline/ethanolamine transporter flvcr2b (Danio rerio (Zebrafish)).